The following is a 220-amino-acid chain: Large ribosomal subunit protein bL9 (220 aa).

The span at 167–184 (AAAEVEQAEDVAAAEQQD) shows a compositional bias: low complexity. The interval 167–220 (AAAEVEQAEDVAAAEQQDSSPVDDHADDADGATGGEGRDEGAGDASDGEEMPST) is disordered.

This sequence belongs to the bacterial ribosomal protein bL9 family.

Its function is as follows. Binds to the 23S rRNA. In Anaplasma marginale (strain St. Maries), this protein is Large ribosomal subunit protein bL9.